The sequence spans 313 residues: Aspartate carbamoyltransferase catalytic subunit (313 aa).

The carbamoyl phosphate site is built by arginine 53 and threonine 54. Lysine 82 lines the L-aspartate pocket. Arginine 103, histidine 131, and glutamine 134 together coordinate carbamoyl phosphate. Residues arginine 163 and arginine 224 each coordinate L-aspartate. Carbamoyl phosphate-binding residues include leucine 263 and proline 264.

It belongs to the aspartate/ornithine carbamoyltransferase superfamily. ATCase family. Heterooligomer of catalytic and regulatory chains.

The enzyme catalyses carbamoyl phosphate + L-aspartate = N-carbamoyl-L-aspartate + phosphate + H(+). It participates in pyrimidine metabolism; UMP biosynthesis via de novo pathway; (S)-dihydroorotate from bicarbonate: step 2/3. Its function is as follows. Catalyzes the condensation of carbamoyl phosphate and aspartate to form carbamoyl aspartate and inorganic phosphate, the committed step in the de novo pyrimidine nucleotide biosynthesis pathway. The polypeptide is Aspartate carbamoyltransferase catalytic subunit (Halorubrum lacusprofundi (strain ATCC 49239 / DSM 5036 / JCM 8891 / ACAM 34)).